Here is a 589-residue protein sequence, read N- to C-terminus: Isocitrate dehydrogenase kinase/phosphatase (589 aa).

ATP contacts are provided by residues 317-323 (AAGIKGM) and K338. The active site involves D373.

The protein belongs to the AceK family.

The protein localises to the cytoplasm. It carries out the reaction L-seryl-[isocitrate dehydrogenase] + ATP = O-phospho-L-seryl-[isocitrate dehydrogenase] + ADP + H(+). Functionally, bifunctional enzyme which can phosphorylate or dephosphorylate isocitrate dehydrogenase (IDH) on a specific serine residue. This is a regulatory mechanism which enables bacteria to bypass the Krebs cycle via the glyoxylate shunt in response to the source of carbon. When bacteria are grown on glucose, IDH is fully active and unphosphorylated, but when grown on acetate or ethanol, the activity of IDH declines drastically concomitant with its phosphorylation. The sequence is that of Isocitrate dehydrogenase kinase/phosphatase from Colwellia psychrerythraea (strain 34H / ATCC BAA-681) (Vibrio psychroerythus).